The primary structure comprises 623 residues: Membrane protein insertase YidC (623 aa).

A helical transmembrane segment spans residues 8-28 (LILATGLSFLVIMVWFFLFPP). A disordered region spans residues 33 to 64 (TEGEPTVATQQTAVAPSATPDAPTTAVPPDAD). Residues 44-62 (TAVAPSATPDAPTTAVPPD) are compositionally biased toward low complexity. The next 4 helical transmembrane spans lie at 379–399 (MGLAIIALTFLLKALVLPLAY), 449–469 (LPILIQIPIFFSLYKVIFVTI), 507–527 (TTMALIFIGALPILLGVSMWL), and 543–563 (IFAWMPWVFMFMLGHFASGLV). Over residues 601–617 (KPAAQPAGKAANDGAAP) the composition is skewed to low complexity. A disordered region spans residues 601–623 (KPAAQPAGKAANDGAAPAKKRKP).

Belongs to the OXA1/ALB3/YidC family. Type 1 subfamily. In terms of assembly, interacts with the Sec translocase complex via SecD. Specifically interacts with transmembrane segments of nascent integral membrane proteins during membrane integration.

It is found in the cell inner membrane. In terms of biological role, required for the insertion and/or proper folding and/or complex formation of integral membrane proteins into the membrane. Involved in integration of membrane proteins that insert both dependently and independently of the Sec translocase complex, as well as at least some lipoproteins. Aids folding of multispanning membrane proteins. The chain is Membrane protein insertase YidC from Cereibacter sphaeroides (strain KD131 / KCTC 12085) (Rhodobacter sphaeroides).